Consider the following 179-residue polypeptide: RNA pyrophosphohydrolase (179 aa).

The 144-residue stretch at glycine 6 to lysine 149 folds into the Nudix hydrolase domain. The Nudix box motif lies at glycine 38–glycine 59.

This sequence belongs to the Nudix hydrolase family. RppH subfamily. It depends on a divalent metal cation as a cofactor.

Accelerates the degradation of transcripts by removing pyrophosphate from the 5'-end of triphosphorylated RNA, leading to a more labile monophosphorylated state that can stimulate subsequent ribonuclease cleavage. In Ruthia magnifica subsp. Calyptogena magnifica, this protein is RNA pyrophosphohydrolase.